Here is a 156-residue protein sequence, read N- to C-terminus: MQLIEGKLQLQGNERIAIVISRFNHIITDRLQEGAIDCFKRHGGNEKLLNLVLVPGAYELPLILDKLLESKKYDGVCVLGAIIRGGTPHFDYVSAEATKGIANTMLKYSMPVSFGVLTTDNIEQAIERAGSKAGNRGFEAMSTLIELLSLCQTLKG.

Residues F23, 57 to 59 (AYE), and 81 to 83 (AII) each bind 5-amino-6-(D-ribitylamino)uracil. Residue 86 to 87 (GT) participates in (2S)-2-hydroxy-3-oxobutyl phosphate binding. Residue H89 is the Proton donor of the active site. Residue F114 coordinates 5-amino-6-(D-ribitylamino)uracil. R128 lines the (2S)-2-hydroxy-3-oxobutyl phosphate pocket.

The protein belongs to the DMRL synthase family.

It carries out the reaction (2S)-2-hydroxy-3-oxobutyl phosphate + 5-amino-6-(D-ribitylamino)uracil = 6,7-dimethyl-8-(1-D-ribityl)lumazine + phosphate + 2 H2O + H(+). It functions in the pathway cofactor biosynthesis; riboflavin biosynthesis; riboflavin from 2-hydroxy-3-oxobutyl phosphate and 5-amino-6-(D-ribitylamino)uracil: step 1/2. Functionally, catalyzes the formation of 6,7-dimethyl-8-ribityllumazine by condensation of 5-amino-6-(D-ribitylamino)uracil with 3,4-dihydroxy-2-butanone 4-phosphate. This is the penultimate step in the biosynthesis of riboflavin. This is 6,7-dimethyl-8-ribityllumazine synthase from Helicobacter acinonychis (strain Sheeba).